The following is a 397-amino-acid chain: Trans-2-enoyl-CoA reductase [NADH] (397 aa).

NAD(+) contacts are provided by residues 53–58 (GCSNGY), 79–80 (FE), 116–117 (DA), and 144–145 (LA). Y230 provides a ligand contact to substrate. Y240 acts as the Proton donor in catalysis. Residues K249 and 276–278 (LVT) each bind NAD(+).

It belongs to the TER reductase family. Monomer.

The catalysed reaction is a 2,3-saturated acyl-CoA + NAD(+) = a (2E)-enoyl-CoA + NADH + H(+). It participates in lipid metabolism; fatty acid biosynthesis. Inhibited by lauroyl-CoA. In terms of biological role, involved in the fatty acid synthesis (FAS II). Catalyzes the reduction of the carbon-carbon double bond of crotonyl-CoA to yield butyryl-CoA. In vitro it can also use hexenoyl-CoA and dodecenoyl-CoA as substrates. The protein is Trans-2-enoyl-CoA reductase [NADH] of Treponema denticola (strain ATCC 35405 / DSM 14222 / CIP 103919 / JCM 8153 / KCTC 15104).